Reading from the N-terminus, the 902-residue chain is Ribonuclease E (902 aa).

The 81-residue stretch at 39–119 (SNIYKGKITR…GTKGAALTTF (81 aa)) folds into the S1 motif domain. Asp303 and Asp346 together coordinate Mg(2+). 2 residues coordinate Zn(2+): Cys404 and Cys407. A required for zinc-mediated homotetramerization and catalytic activity region spans residues 404-407 (CPRC). The interval 881–902 (GKNSAGVHSATNFSNSPVSKLK) is disordered. Residues 889–902 (SATNFSNSPVSKLK) are compositionally biased toward polar residues.

It belongs to the RNase E/G family. RNase E subfamily. Component of the RNA degradosome, which is a multiprotein complex involved in RNA processing and mRNA degradation. Within the RNA degradosome, RNase E assembles into a homotetramer formed by a dimer of dimers. It depends on Zn(2+) as a cofactor. The cofactor is Mg(2+).

It is found in the cytoplasm. It localises to the cell inner membrane. The catalysed reaction is Endonucleolytic cleavage of single-stranded RNA in A- and U-rich regions.. In terms of biological role, endoribonuclease that plays a central role in RNA processing and decay. Required for the maturation of 5S and 16S rRNAs and the majority of tRNAs. Also involved in the degradation of most mRNAs. The polypeptide is Ribonuclease E (Buchnera aphidicola subsp. Acyrthosiphon pisum (strain APS) (Acyrthosiphon pisum symbiotic bacterium)).